A 345-amino-acid chain; its full sequence is S-adenosylmethionine:tRNA ribosyltransferase-isomerase (345 aa).

It belongs to the QueA family. As to quaternary structure, monomer.

Its subcellular location is the cytoplasm. It catalyses the reaction 7-aminomethyl-7-carbaguanosine(34) in tRNA + S-adenosyl-L-methionine = epoxyqueuosine(34) in tRNA + adenine + L-methionine + 2 H(+). It functions in the pathway tRNA modification; tRNA-queuosine biosynthesis. Functionally, transfers and isomerizes the ribose moiety from AdoMet to the 7-aminomethyl group of 7-deazaguanine (preQ1-tRNA) to give epoxyqueuosine (oQ-tRNA). This chain is S-adenosylmethionine:tRNA ribosyltransferase-isomerase, found in Shewanella sp. (strain MR-4).